The sequence spans 122 residues: MIQPQTHLNVADNSGARKLMCIRIIGASNRRYAKIGDVVVAVIKEAIPNTPLERSEVIRAVIVRTCKELKRDNGMIIRYDDNAAVVIDQERNPKGTRIFGAIARELRQLNFTKIVSLAPEVL.

It belongs to the universal ribosomal protein uL14 family. As to quaternary structure, part of the 50S ribosomal subunit.

It is found in the plastid. It localises to the chloroplast. Binds to 23S rRNA. This Morus indica (Mulberry) protein is Large ribosomal subunit protein uL14c.